The primary structure comprises 308 residues: MIVSTLEHILTHISFSIVSILITIKLRIFLADEIKKLYDSSERGMLVTFFCITGLLATHWIYLGHFPLSDLSESLIFLSWSFALIHSIAYFTKNTKLLSTITSQSTVFTQGFATSGILTEIQKSSILVPALQSEWLIMHVSLMILGYAALLCGSLLSVALMVITFRKDGKFFSKSKDFLFTEIFYKKIFVFNYNNYYKTQLIQELDFWSYQVIGLGFIFLTIGILSGAVWANEAWGSYWSWDPKETWAFITWIVFAIYLHTRKKRSLQGTNSAIVASIGFLIIWICYFGVNLVGLGLHSYGSFPSTSN.

The next 7 membrane-spanning stretches (helical) occupy residues 2–22 (IVSTLEHILTHISFSIVSILI), 44–64 (GMLVTFFCITGLLATHWIYLG), 71–91 (LSESLIFLSWSFALIHSIAYF), 143–163 (MILGYAALLCGSLLSVALMVI), 212–232 (VIGLGFIFLTIGILSGAVWAN), 239–259 (WSWDPKETWAFITWIVFAIYL), and 273–293 (AIVASIGFLIIWICYFGVNLV).

The protein belongs to the CcmF/CycK/Ccl1/NrfE/CcsA family. In terms of assembly, may interact with Ccs1.

It localises to the plastid membrane. Required during biogenesis of c-type cytochromes (cytochrome c6 and cytochrome f) at the step of heme attachment. This is Cytochrome c biogenesis protein CcsA from Cuscuta exaltata (Tall dodder).